Here is a 358-residue protein sequence, read N- to C-terminus: Putative pyruvyl transferase EpsI (358 aa).

This sequence belongs to the polysaccharide pyruvyl transferase family.

May be involved in the production of the exopolysaccharide (EPS) component of the extracellular matrix during biofilm formation. EPS is responsible for the adhesion of chains of cells into bundles. The protein is Putative pyruvyl transferase EpsI (epsI) of Bacillus subtilis (strain 168).